Here is a 159-residue protein sequence, read N- to C-terminus: 2-C-methyl-D-erythritol 2,4-cyclodiphosphate synthase (159 aa).

Asp-10 and His-12 together coordinate a divalent metal cation. 4-CDP-2-C-methyl-D-erythritol 2-phosphate-binding positions include 10-12 (DVH) and 36-37 (HS). Residue His-44 participates in a divalent metal cation binding. 4-CDP-2-C-methyl-D-erythritol 2-phosphate is bound by residues 58-60 (DIG), 63-67 (FANTD), 134-137 (TTNE), and Arg-144.

Belongs to the IspF family. In terms of assembly, homotrimer. The cofactor is a divalent metal cation.

It carries out the reaction 4-CDP-2-C-methyl-D-erythritol 2-phosphate = 2-C-methyl-D-erythritol 2,4-cyclic diphosphate + CMP. The protein operates within isoprenoid biosynthesis; isopentenyl diphosphate biosynthesis via DXP pathway; isopentenyl diphosphate from 1-deoxy-D-xylulose 5-phosphate: step 4/6. Involved in the biosynthesis of isopentenyl diphosphate (IPP) and dimethylallyl diphosphate (DMAPP), two major building blocks of isoprenoid compounds. Catalyzes the conversion of 4-diphosphocytidyl-2-C-methyl-D-erythritol 2-phosphate (CDP-ME2P) to 2-C-methyl-D-erythritol 2,4-cyclodiphosphate (ME-CPP) with a corresponding release of cytidine 5-monophosphate (CMP). This is 2-C-methyl-D-erythritol 2,4-cyclodiphosphate synthase from Cytophaga hutchinsonii (strain ATCC 33406 / DSM 1761 / CIP 103989 / NBRC 15051 / NCIMB 9469 / D465).